The following is an 865-amino-acid chain: Protein fluG (865 aa).

The 92-residue stretch at 442-533 (PGVKYVWTQF…VMTWWKSEQG (92 aa)) folds into the GS beta-grasp domain. The 326-residue stretch at 540-865 (PRTNLLNINN…ARRKWLVERY (326 aa)) folds into the GS catalytic domain.

This sequence belongs to the glutamine synthetase family.

It localises to the cytoplasm. Its function is as follows. May function as a GSI-related enzyme in synthesizing a small diffusible factor that acts as an extracellular signal directing asexual sporulation and perhaps other aspects of colony growth. May be involved in brlA activation (an early transcriptional regulator for conidiation specific gene). The sequence is that of Protein fluG (fluG) from Emericella nidulans (strain FGSC A4 / ATCC 38163 / CBS 112.46 / NRRL 194 / M139) (Aspergillus nidulans).